A 458-amino-acid polypeptide reads, in one-letter code: ATP synthase subunit beta (458 aa).

Residue 148–155 coordinates ATP; that stretch reads GGAGVGKT.

Belongs to the ATPase alpha/beta chains family. In terms of assembly, F-type ATPases have 2 components, CF(1) - the catalytic core - and CF(0) - the membrane proton channel. CF(1) has five subunits: alpha(3), beta(3), gamma(1), delta(1), epsilon(1). CF(0) has three main subunits: a(1), b(2) and c(9-12). The alpha and beta chains form an alternating ring which encloses part of the gamma chain. CF(1) is attached to CF(0) by a central stalk formed by the gamma and epsilon chains, while a peripheral stalk is formed by the delta and b chains.

It is found in the cell inner membrane. It carries out the reaction ATP + H2O + 4 H(+)(in) = ADP + phosphate + 5 H(+)(out). Its function is as follows. Produces ATP from ADP in the presence of a proton gradient across the membrane. The catalytic sites are hosted primarily by the beta subunits. This is ATP synthase subunit beta from Halorhodospira halophila (strain DSM 244 / SL1) (Ectothiorhodospira halophila (strain DSM 244 / SL1)).